A 348-amino-acid chain; its full sequence is tRNA N6-adenosine threonylcarbamoyltransferase (348 aa).

2 residues coordinate Fe cation: His115 and His119. Residues 138–142, Asp171, Gly184, and Asn276 contribute to the substrate site; that span reads LVSGG. Asp304 lines the Fe cation pocket.

The protein belongs to the KAE1 / TsaD family. Fe(2+) is required as a cofactor.

It localises to the cytoplasm. The enzyme catalyses L-threonylcarbamoyladenylate + adenosine(37) in tRNA = N(6)-L-threonylcarbamoyladenosine(37) in tRNA + AMP + H(+). In terms of biological role, required for the formation of a threonylcarbamoyl group on adenosine at position 37 (t(6)A37) in tRNAs that read codons beginning with adenine. Is involved in the transfer of the threonylcarbamoyl moiety of threonylcarbamoyl-AMP (TC-AMP) to the N6 group of A37, together with TsaE and TsaB. TsaD likely plays a direct catalytic role in this reaction. The polypeptide is tRNA N6-adenosine threonylcarbamoyltransferase (Xylella fastidiosa (strain M23)).